A 239-amino-acid chain; its full sequence is Ubiquinone biosynthesis O-methyltransferase (239 aa).

Arg42, Gly62, Asp83, and Met127 together coordinate S-adenosyl-L-methionine.

The protein belongs to the methyltransferase superfamily. UbiG/COQ3 family.

It carries out the reaction a 3-demethylubiquinol + S-adenosyl-L-methionine = a ubiquinol + S-adenosyl-L-homocysteine + H(+). It catalyses the reaction a 3-(all-trans-polyprenyl)benzene-1,2-diol + S-adenosyl-L-methionine = a 2-methoxy-6-(all-trans-polyprenyl)phenol + S-adenosyl-L-homocysteine + H(+). The protein operates within cofactor biosynthesis; ubiquinone biosynthesis. In terms of biological role, O-methyltransferase that catalyzes the 2 O-methylation steps in the ubiquinone biosynthetic pathway. The polypeptide is Ubiquinone biosynthesis O-methyltransferase (Pectobacterium carotovorum subsp. carotovorum (strain PC1)).